The following is a 159-amino-acid chain: Probable RNA-binding protein EIF1AD (159 aa).

Residues 18-93 (MMEDDYALPT…VKAEICKILT (76 aa)) enclose the S1-like domain. The segment at 109–159 (KFTKKPVQEEATSQNKDDSDFEDDLLPNTNRPVNRDSSDEEEDEETSSEED) is disordered. The segment covering 146-159 (SDEEEDEETSSEED) has biased composition (acidic residues).

Belongs to the EIF1AD family.

The protein is Probable RNA-binding protein EIF1AD of Drosophila melanogaster (Fruit fly).